We begin with the raw amino-acid sequence, 834 residues long: MTRSPIRRLVFGTLRRLLYLWVRSETINQSSFTLDLDRSRPVFYVLQNPSLTDLAVVDTECTKAGLPRPVLPVSVGNLLEPAAFFYLTPEPDWLGRQDKRGAPPTLTRLVSALTQNAAEDAQIIPVSVFWGQSPDSESSPWKLLFADSWAVTGRLRRLLSIMILGRKTRVQFSAPINLRELIEHNKGHERTVRMAQRILRVHFRNLKAAVIGPDISHRRNLVKGLLNQPLVKQAILDEAEREKISPEKAKAQALRYGNEIASDYTYTAIRFLEVVLSWFWNKIYDGIKVNHLEGVQKIAQGHEVIYVPCHRSHIDYLLLSYLLFRNGLTPPHIAAGINLNMPVIGGLLRRGGAFFMRRTFKGNPLYTSVFNEYLHTLFTKGFPVEYFVEGGRSRTGRMLQPKTGMLAITLRSFLRSSRMPIVFVPVYIGYERVLEGRTYLGELRGASKKKESIFDIFKVIGALKQRFGQVAVNFGEPIKLAEFLDQEQPDWRTQELGPQYRPAWLNETTNRLGERVAQHLNEAAAINPVNLVALALLSTTRLALDDRAMARVLDLYLALLRRVPYSPHTTLPEGDGRALIQHVKDMDLLAEQSDALGKILYLDEQNAVLMTYYRNNVLHIFALPALLASFFQSSSRMSREQILRYTRALYPYLQSELFIRWPLDELDAVVDQWLEAFVEQGLLRFEKDLYQRPAPSSRHFVLLTLLSKSIAQTLQRFYMAISLLLNSGQNSISAEELEDLCTVMAQRLSILHGLNAPEFFDKSLFRHFIQTLLDQGVLRRDEAGKLSYHEALGELAEGAAKRVLPAEIRLSIRQVALHRSEDAADQLAAPAQND.

Positions 309 to 314 (CHRSHI) match the HXXXXD motif motif.

It belongs to the GPAT/DAPAT family.

It localises to the cell inner membrane. The enzyme catalyses sn-glycerol 3-phosphate + an acyl-CoA = a 1-acyl-sn-glycero-3-phosphate + CoA. Its pathway is phospholipid metabolism; CDP-diacylglycerol biosynthesis; CDP-diacylglycerol from sn-glycerol 3-phosphate: step 1/3. The polypeptide is Glycerol-3-phosphate acyltransferase (Pseudomonas fluorescens (strain ATCC BAA-477 / NRRL B-23932 / Pf-5)).